The following is a 285-amino-acid chain: Sulfotransferase 2A1 (285 aa).

3'-phosphoadenylyl sulfate-binding residues include lysine 44, serine 45, glycine 46, threonine 47, asparagine 48, and tryptophan 49. Catalysis depends on histidine 99, which acts as the Proton acceptor. Positions 121, 129, 184, 218, 223, 247, 248, and 249 each coordinate 3'-phosphoadenylyl sulfate. Serine 251 carries the phosphoserine modification.

Belongs to the sulfotransferase 1 family. As to quaternary structure, homodimer. The N-terminus is blocked. Liver, adrenal and at lower level in the kidney. Is present in human fetus in higher level in the adrenal than the liver and the kidney.

The protein resides in the cytoplasm. It catalyses the reaction an alcohol + 3'-phosphoadenylyl sulfate = an alkyl sulfate + adenosine 3',5'-bisphosphate + H(+). The enzyme catalyses (24S)-hydroxycholesterol + 3'-phosphoadenylyl sulfate = (24S)-hydroxycholesterol 24-sulfate + adenosine 3',5'-bisphosphate + H(+). The catalysed reaction is (24S)-hydroxycholesterol + 3'-phosphoadenylyl sulfate = (24S)-hydroxycholesterol 3-sulfate + adenosine 3',5'-bisphosphate + H(+). It carries out the reaction (24S)-hydroxycholesterol 24-sulfate + 3'-phosphoadenylyl sulfate = (24S)-hydroxycholesterol 3,24-disulfate + adenosine 3',5'-bisphosphate + H(+). It catalyses the reaction 3beta-hydroxyandrost-5-en-17-one + 3'-phosphoadenylyl sulfate = dehydroepiandrosterone 3-sulfate + adenosine 3',5'-bisphosphate + H(+). The enzyme catalyses pregnenolone + 3'-phosphoadenylyl sulfate = pregnenolone sulfate + adenosine 3',5'-bisphosphate + H(+). The catalysed reaction is androsterone + 3'-phosphoadenylyl sulfate = androsterone 3alpha-sulfate + adenosine 3',5'-bisphosphate + H(+). It carries out the reaction taurolithocholate + 3'-phosphoadenylyl sulfate = taurolithocholate 3-sulfate + adenosine 3',5'-bisphosphate + H(+). It catalyses the reaction lithocholate + 3'-phosphoadenylyl sulfate = lithocholate sulfate + adenosine 3',5'-bisphosphate + H(+). Subject to substrate inhibition. Alternate orientations for binding of steroid substrates to SULT2A1 may play a role in substrate inhibition. Its function is as follows. Sulfotransferase that utilizes 3'-phospho-5'-adenylyl sulfate (PAPS) as sulfonate donor to catalyze the sulfonation of steroids and bile acids in the liver and adrenal glands. Mediates the sulfation of a wide range of steroids and sterols, including pregnenolone, androsterone, DHEA, bile acids, cholesterol and as well many xenobiotics that contain alcohol and phenol functional groups. Sulfonation increases the water solubility of most compounds, and therefore their renal excretion, but it can also result in bioactivation to form active metabolites. Plays an important role in maintening steroid and lipid homeostasis. Plays a key role in bile acid metabolism. In addition, catalyzes the metabolic activation of potent carcinogenic polycyclic arylmethanols. This is Sulfotransferase 2A1 (SULT2A1) from Homo sapiens (Human).